A 172-amino-acid polypeptide reads, in one-letter code: Large ribosomal subunit protein uL10 (172 aa).

Belongs to the universal ribosomal protein uL10 family. In terms of assembly, part of the ribosomal stalk of the 50S ribosomal subunit. The N-terminus interacts with L11 and the large rRNA to form the base of the stalk. The C-terminus forms an elongated spine to which L12 dimers bind in a sequential fashion forming a multimeric L10(L12)X complex.

In terms of biological role, forms part of the ribosomal stalk, playing a central role in the interaction of the ribosome with GTP-bound translation factors. The sequence is that of Large ribosomal subunit protein uL10 from Rhodopseudomonas palustris (strain TIE-1).